Consider the following 762-residue polypeptide: Semaphorin-4A (762 aa).

Residues 1-32 form the signal peptide; the sequence is MALPALGLDSWSFLGLFLFQLLLLFLPPATTA. The Extracellular portion of the chain corresponds to 33-684; that stretch reads GREGQGPTPR…LAAPKSYWPH (652 aa). The 459-residue stretch at 37–495 folds into the Sema domain; the sequence is QGPTPRVKYH…FSGGIWKVPR (459 aa). An intrachain disulfide couples C114 to C125. N-linked (GlcNAc...) asparagine glycans are attached at residues N121 and N136. Intrachain disulfides connect C143-C152, C270-C380, and C294-C340. 2 N-linked (GlcNAc...) asparagine glycosylation sites follow: N314 and N497. The region spanning 497 to 544 is the PSI domain; that stretch reads NCSVYESCMDCVLARDPHCAWDPESQTCRLLPTPILKSWKQDMQQGNP. 2 disulfide bridges follow: C498-C515 and C507-C524. One can recognise an Ig-like C2-type domain in the interval 574 to 632; that stretch reads NSILELPCPQSSALASYHWSHGVEAIPEAPSTVYNGSLLLLLRDGAGGLYQCWATENDF. Residue N608 is glycosylated (N-linked (GlcNAc...) asparagine). Residues 685-705 traverse the membrane as a helical segment; that stretch reads FLTVTVLLALVLSGALVTFLV. Residues 706–762 lie on the Cytoplasmic side of the membrane; sequence SPLGALRARGKVQGCGTLPSREKAPLSSEQCLQPSKEGRTSASDMDADNNLQGTEVA. Positions 722-762 are disordered; it reads TLPSREKAPLSSEQCLQPSKEGRTSASDMDADNNLQGTEVA.

The protein belongs to the semaphorin family. Interacts with PLXNB1, PLXNB2, PLXNB3, PLXND1 and TIMD2.

It is found in the cell membrane. In terms of biological role, cell surface receptor for PLXNB1, PLXNB2, PLXNB3 and PLXND1 that plays an important role in cell-cell signaling. Regulates glutamatergic and GABAergic synapse development. Promotes the development of inhibitory synapses in a PLXNB1-dependent manner and promotes the development of excitatory synapses in a PLXNB2-dependent manner. Plays a role in priming antigen-specific T-cells, promotes differentiation of Th1 T-helper cells, and thereby contributes to adaptive immunity. Promotes phosphorylation of TIMD2. Inhibits angiogenesis. Promotes axon growth cone collapse. Inhibits axonal extension by providing local signals to specify territories inaccessible for growing axons. This Bos taurus (Bovine) protein is Semaphorin-4A (SEMA4A).